The sequence spans 629 residues: Probable potassium transport system protein Kup 3 (629 aa).

Transmembrane regions (helical) follow at residues 20–40, 54–74, 106–126, 143–163, 171–191, 212–232, 253–273, 291–311, 343–363, 372–392, 400–420, and 425–445; these read LSLS…LYTF, VTTI…IASV, PFII…GTIT, PSLK…LFAI, IGKA…ILGA, FLFS…LCVT, WFGL…ALVL, FLLP…QAII, IYIG…IIGF, AYGI…FIAL, IIKS…FFAA, and FING…MMYI.

Belongs to the HAK/KUP transporter (TC 2.A.72) family.

The protein localises to the cell inner membrane. It carries out the reaction K(+)(in) + H(+)(in) = K(+)(out) + H(+)(out). Functionally, transport of potassium into the cell. Likely operates as a K(+):H(+) symporter. In Legionella pneumophila (strain Corby), this protein is Probable potassium transport system protein Kup 3.